The chain runs to 483 residues: GDP-fucose protein O-fucosyltransferase 3 (483 aa).

The Cytoplasmic portion of the chain corresponds to 1–8; that stretch reads MVRIPRRK. Residues 9–31 form a helical; Signal-anchor for type II membrane protein membrane-spanning segment; the sequence is LLPSCLCMTATVFLMVTVQVLVE. Over 32–483 the chain is Lumenal; the sequence is LGKFERKKFK…FWALVFKDSF (452 aa). Residues 45–64 are disordered; that stretch reads LQDGQKDVEGDPKHLNPLPK. Residues N110, N168, and N318 are each glycosylated (N-linked (GlcNAc...) asparagine). C389 and C392 are oxidised to a cystine. N-linked (GlcNAc...) asparagine glycosylation is present at N468.

This sequence belongs to the glycosyltransferase 10 family.

The protein localises to the endoplasmic reticulum membrane. It catalyses the reaction L-threonyl-[protein] + GDP-beta-L-fucose = 3-O-(alpha-L-fucosyl)-L-threonyl-[protein] + GDP + H(+). The enzyme catalyses L-seryl-[protein] + GDP-beta-L-fucose = 3-O-(alpha-L-fucosyl)-L-seryl-[protein] + GDP + H(+). It participates in protein modification; protein glycosylation. Functionally, protein O-fucosyltransferase that specifically catalyzes O-fucosylation of serine or threonine residues in EMI domains of target proteins, such as MMRN1, MMRN2 and EMID1. Attaches fucose through an O-glycosidic linkage. O-fucosylation of EMI domain-containing proteins may be required for facilitating protein folding and secretion. May also show alpha-(1,3)-fucosyltransferase activity toward the innermost N-acetyl glucosamine (GlcNAc) residue in biantennary N-glycan acceptors. However, this was tested with a library of synthetic substrates and this activity is unsure in vivo. May be involved in biosynthesis of Lewis X-carrying biantennary N-glycans that regulate neuron stem cell self-renewal during brain development. The sequence is that of GDP-fucose protein O-fucosyltransferase 3 (Fut10) from Rattus norvegicus (Rat).